The primary structure comprises 365 residues: MKSVRSFIRDDIQAMSAYQIADVPPGFAKLDSMESPVHPFAGHETLLQEWQARLAAAPIHLYPNPSGSGLQEALRSAFDIPDCADIALGNGSDELIQFITMLTAKPGAAMLAAEPSFVMYRHNAALYGMDYVGVPLNGDFTLNLPAVLEAVRKHRPALTFIAYPNNPTGVCFTRAEIEAVIEASDGIVVVDEAYGAFNGDSFLPQAGRIPNLIVLRTLSKIGFAGLRIGYAAGCPEVIGELQKILPPYNMNQLSLTTAKLALRHYGIISANIDSLKNERERMFAELGKICRLNTFSSQANFITIRVPDADLLFDTLKQNRILVKKLHGAHPLLEHCLRITVGSPAQNDAVLNIIRQLYCQPTDFL.

K220 carries the post-translational modification N6-(pyridoxal phosphate)lysine.

This sequence belongs to the class-II pyridoxal-phosphate-dependent aminotransferase family. Histidinol-phosphate aminotransferase subfamily. In terms of assembly, homodimer. The cofactor is pyridoxal 5'-phosphate.

The catalysed reaction is L-histidinol phosphate + 2-oxoglutarate = 3-(imidazol-4-yl)-2-oxopropyl phosphate + L-glutamate. Its pathway is amino-acid biosynthesis; L-histidine biosynthesis; L-histidine from 5-phospho-alpha-D-ribose 1-diphosphate: step 7/9. The protein is Histidinol-phosphate aminotransferase of Neisseria meningitidis serogroup B (strain ATCC BAA-335 / MC58).